The chain runs to 150 residues: Large ribosomal subunit protein bL9 (150 aa).

Belongs to the bacterial ribosomal protein bL9 family.

Binds to the 23S rRNA. The chain is Large ribosomal subunit protein bL9 from Shewanella frigidimarina (strain NCIMB 400).